Reading from the N-terminus, the 894-residue chain is Septin and tuftelin-interacting protein 1 homolog (894 aa).

Disordered stretches follow at residues 71–149 (YEPN…DKPV) and 187–225 (NAGLASVTELNVNSSDDSDDSDQSEGDTDSDNENKRSLG). Residues 73-84 (PNEHKLKNKDGE) are compositionally biased toward basic and acidic residues. Positions 97 to 126 (KKKKKEKKEKKQKKKEKKEKKEKKNKKKNK) are enriched in basic residues. The 47-residue stretch at 149–195 (VGGIGAALLSKMGYKGTGGLGRDGGGMVEPIKVQVRPKNAGLASVTE) folds into the G-patch domain. Over residues 202 to 217 (DDSDDSDQSEGDTDSD) the composition is skewed to acidic residues. Residues 329–449 (KQIDIQNQDN…SDNNDNSSLE (121 aa)) adopt a coiled-coil conformation. Positions 785–821 (NNNNNNNINNSYQQQNQQQPIKPISSPSLNSSNNNNI) are disordered.

Belongs to the TFP11/STIP family. Identified in the spliceosome C complex.

The protein localises to the cytoplasm. It is found in the nucleus. Its function is as follows. May be involved in pre-mRNA splicing. This is Septin and tuftelin-interacting protein 1 homolog (stip-1) from Dictyostelium discoideum (Social amoeba).